A 175-amino-acid chain; its full sequence is ATP synthase subunit delta (175 aa).

Belongs to the ATPase delta chain family. As to quaternary structure, F-type ATPases have 2 components, F(1) - the catalytic core - and F(0) - the membrane proton channel. F(1) has five subunits: alpha(3), beta(3), gamma(1), delta(1), epsilon(1). F(0) has three main subunits: a(1), b(2) and c(10-14). The alpha and beta chains form an alternating ring which encloses part of the gamma chain. F(1) is attached to F(0) by a central stalk formed by the gamma and epsilon chains, while a peripheral stalk is formed by the delta and b chains.

Its subcellular location is the cell membrane. Its function is as follows. F(1)F(0) ATP synthase produces ATP from ADP in the presence of a proton or sodium gradient. F-type ATPases consist of two structural domains, F(1) containing the extramembraneous catalytic core and F(0) containing the membrane proton channel, linked together by a central stalk and a peripheral stalk. During catalysis, ATP synthesis in the catalytic domain of F(1) is coupled via a rotary mechanism of the central stalk subunits to proton translocation. Functionally, this protein is part of the stalk that links CF(0) to CF(1). It either transmits conformational changes from CF(0) to CF(1) or is implicated in proton conduction. The sequence is that of ATP synthase subunit delta from Lactococcus lactis subsp. cremoris (strain MG1363).